Here is a 775-residue protein sequence, read N- to C-terminus: Subtilisin-like protease SBT1.5 (775 aa).

The signal sequence occupies residues Met-1–Ser-19. Positions Ala-20 to His-103 are cleaved as a propeptide — activation peptide. Residues Thr-27–His-103 form the Inhibitor I9 domain. Residues Ser-107–Met-617 enclose the Peptidase S8 domain. The active-site Charge relay system is the Asp-137. Asn-196 carries N-linked (GlcNAc...) asparagine glycosylation. The active-site Charge relay system is the His-210. Residues Met-367–Arg-459 form the PA domain. Catalysis depends on Ser-549, which acts as the Charge relay system. Asn-599, Asn-638, and Asn-762 each carry an N-linked (GlcNAc...) asparagine glycan.

This sequence belongs to the peptidase S8 family.

Its subcellular location is the secreted. In Arabidopsis thaliana (Mouse-ear cress), this protein is Subtilisin-like protease SBT1.5.